The following is a 227-amino-acid chain: 2-C-methyl-D-erythritol 4-phosphate cytidylyltransferase (227 aa).

Belongs to the IspD/TarI cytidylyltransferase family. IspD subfamily.

It catalyses the reaction 2-C-methyl-D-erythritol 4-phosphate + CTP + H(+) = 4-CDP-2-C-methyl-D-erythritol + diphosphate. It participates in isoprenoid biosynthesis; isopentenyl diphosphate biosynthesis via DXP pathway; isopentenyl diphosphate from 1-deoxy-D-xylulose 5-phosphate: step 2/6. Functionally, catalyzes the formation of 4-diphosphocytidyl-2-C-methyl-D-erythritol from CTP and 2-C-methyl-D-erythritol 4-phosphate (MEP). The polypeptide is 2-C-methyl-D-erythritol 4-phosphate cytidylyltransferase (Nostoc punctiforme (strain ATCC 29133 / PCC 73102)).